Here is a 465-residue protein sequence, read N- to C-terminus: Ribulose bisphosphate carboxylase large chain (465 aa).

Lys-4 bears the N6,N6,N6-trimethyllysine mark. Asn-113 and Thr-163 together coordinate substrate. Catalysis depends on Lys-165, which acts as the Proton acceptor. Lys-167 is a substrate binding site. Mg(2+)-binding residues include Lys-191, Asp-193, and Glu-194. Lys-191 is modified (N6-carboxylysine). The active-site Proton acceptor is His-284. Residues Arg-285, His-317, and Ser-369 each coordinate substrate.

Belongs to the RuBisCO large chain family. Type I subfamily. As to quaternary structure, heterohexadecamer of 8 large chains and 8 small chains; disulfide-linked. The disulfide link is formed within the large subunit homodimers. It depends on Mg(2+) as a cofactor. In terms of processing, the disulfide bond which can form in the large chain dimeric partners within the hexadecamer appears to be associated with oxidative stress and protein turnover.

The protein resides in the plastid. Its subcellular location is the chloroplast. The catalysed reaction is 2 (2R)-3-phosphoglycerate + 2 H(+) = D-ribulose 1,5-bisphosphate + CO2 + H2O. It catalyses the reaction D-ribulose 1,5-bisphosphate + O2 = 2-phosphoglycolate + (2R)-3-phosphoglycerate + 2 H(+). Its function is as follows. RuBisCO catalyzes two reactions: the carboxylation of D-ribulose 1,5-bisphosphate, the primary event in carbon dioxide fixation, as well as the oxidative fragmentation of the pentose substrate in the photorespiration process. Both reactions occur simultaneously and in competition at the same active site. In Hamamelis mollis (Chinese witch hazel), this protein is Ribulose bisphosphate carboxylase large chain.